A 206-amino-acid polypeptide reads, in one-letter code: Small ribosomal subunit protein uS4 (206 aa).

The region spanning 96 to 158 (GRLDNVVYRM…AKKQSRIKAA (63 aa)) is the S4 RNA-binding domain.

Belongs to the universal ribosomal protein uS4 family. In terms of assembly, part of the 30S ribosomal subunit. Contacts protein S5. The interaction surface between S4 and S5 is involved in control of translational fidelity.

One of the primary rRNA binding proteins, it binds directly to 16S rRNA where it nucleates assembly of the body of the 30S subunit. Its function is as follows. With S5 and S12 plays an important role in translational accuracy. The polypeptide is Small ribosomal subunit protein uS4 (Vibrio cholerae serotype O1 (strain ATCC 39541 / Classical Ogawa 395 / O395)).